The sequence spans 485 residues: Adenylate kinase 8 (485 aa).

2 adenylate kinase regions span residues P58–L258 and P269–S472. A67–T72 is a binding site for ATP. The segment at T87 to V113 is NMP 1. AMP-binding positions include G140–K143 and Q147. The LID 1 stretch occupies residues G177–E206. Residue R218 participates in AMP binding. G278–L283 is an ATP binding site. An NMP 2 region spans residues C298–V327. Residues Q325–V327, G354–R357, and Q361 contribute to the AMP site. An LID 2 region spans residues L391–H424. R432 lines the AMP pocket.

It belongs to the adenylate kinase family.

The protein resides in the cytoplasm. The protein localises to the cytosol. It carries out the reaction AMP + ATP = 2 ADP. The enzyme catalyses a 2'-deoxyribonucleoside 5'-diphosphate + ATP = a 2'-deoxyribonucleoside 5'-triphosphate + ADP. It catalyses the reaction a ribonucleoside 5'-diphosphate + ATP = a ribonucleoside 5'-triphosphate + ADP. In terms of biological role, nucleoside monophosphate (NMP) kinase that catalyzes the reversible transfer of the terminal phosphate group between nucleoside triphosphates and monophosphates. Has highest activity toward AMP, and weaker activity toward dAMP, CMP and dCMP. Also displays broad nucleoside diphosphate kinase activity. The protein is Adenylate kinase 8 (ak8) of Xenopus tropicalis (Western clawed frog).